Here is an 801-residue protein sequence, read N- to C-terminus: K(+)-insensitive pyrophosphate-energized proton pump (801 aa).

5 helical membrane-spanning segments follow: residues 27–47, 81–101, 109–129, 170–190, and 201–221; these read VIVMVIGVVALAALVVAGILV, TLGVFAVVVFFLLMLLPADDW, VFFLIGALFSATTGYTGMWLA, GVVGMFTVGLGLLGASCVVLV, and GFGLGAALIAMFMRVGGGIFT. Lys222 contacts substrate. Asp225, Asp229, Asn252, and Asp255 together coordinate Mg(2+). Helical transmembrane passes span 261 to 281, 292 to 312, 328 to 348, 372 to 392, 406 to 426, 429 to 449, and 453 to 473; these read AGMAADLFESYAVTLVAALIL, AFPLIVPAIGVLTAMIGIFAV, GFFVSAVFSLALVAVAVYVYL, ILAMVAVAIGIVLAALIQQLT, IGKSSLTGAATVVLAGISVGL, AVYTALLIGLGVYGAFLLGGT, and LALFAVALAGTGLLTTVGVIV. Asp483 is a Mg(2+) binding site. Transmembrane regions (helical) follow at residues 515–535, 571–591, 641–661, and 663–683; these read AITKGIAIATAVLAASALFGS, VGLIAGAAVVFLFSGLAINAV, LLAVLAPIAIGFTLGVGALGA, and LAGAIGTGTLMAVFLANSGGA. Residues Asp685, Asp711, and Asp715 each contribute to the Ca(2+) site. Lys718 serves as a coordination point for substrate. Transmembrane regions (helical) follow at residues 724 to 744 and 754 to 774; these read AINPLLKVMNLVALLIAPAVV and LGVRIAIAVLSILVIVGAVYI.

It belongs to the H(+)-translocating pyrophosphatase (TC 3.A.10) family. K(+)-insensitive subfamily. In terms of assembly, homodimer. The cofactor is Mg(2+).

It is found in the cell membrane. It carries out the reaction diphosphate + H2O + H(+)(in) = 2 phosphate + 2 H(+)(out). Its function is as follows. Proton pump that utilizes the energy of pyrophosphate hydrolysis as the driving force for proton movement across the membrane. Generates a proton motive force. The protein is K(+)-insensitive pyrophosphate-energized proton pump of Streptomyces avermitilis (strain ATCC 31267 / DSM 46492 / JCM 5070 / NBRC 14893 / NCIMB 12804 / NRRL 8165 / MA-4680).